Here is a 238-residue protein sequence, read N- to C-terminus: Cadherin-2 (238 aa).

Cadherin domains follow at residues 1–46, 47–161, and 162–238; these read TKPL…RPEF, LHQV…PPEF, and TAMT…RMFV. Topologically, residues 1–238 are extracellular; it reads TKPLDRELIA…IDFETNRMFV (238 aa). Residues aspartate 5, glutamate 7, aspartate 38, methionine 39, asparagine 40, aspartate 41, and asparagine 42 each contribute to the Ca(2+) site. Asparagine 52 carries an N-linked (GlcNAc...) asparagine glycan. Aspartate 72, aspartate 74, and asparagine 80 together coordinate Ca(2+). Asparagine 104 carries N-linked (GlcNAc...) asparagine glycosylation. Aspartate 132 contributes to the Ca(2+) binding site. N-linked (GlcNAc...) asparagine glycosylation occurs at asparagine 181.

As to quaternary structure, homodimer (via extracellular region). Can also form heterodimers with other cadherins (via extracellular region). Dimerization occurs in trans, i.e. with a cadherin chain from another cell. Interacts with CDCP1. Interacts with PCDH8; this complex may also include TAOK2. The interaction with PCDH8 may lead to internalization through TAOK2/p38 MAPK pathway. Identified in a complex containing FGFR4, NCAM1, CDH2, PLCG1, FRS2, SRC, SHC1, GAP43 and CTTN. May interact with OBSCN (via protein kinase domain 2). Cleaved by MMP24. Ectodomain cleavage leads to the generation of a soluble 90 kDa N-terminal soluble fragment and a 45 kDa membrane-bound C-terminal fragment 1 (CTF1), which is further cleaved by gamma-secretase into a 35 kDa. Cleavage in neural stem cells by MMP24 affects CDH2-mediated anchorage of neural stem cells to ependymocytes in the adult subependymal zone, leading to modulate neural stem cell quiescence. In terms of processing, may be phosphorylated by OBSCN.

Its subcellular location is the cell membrane. It localises to the sarcolemma. The protein localises to the cell junction. It is found in the cell surface. The protein resides in the desmosome. Its subcellular location is the adherens junction. Calcium-dependent cell adhesion protein; preferentially mediates homotypic cell-cell adhesion by dimerization with a CDH2 chain from another cell. Cadherins may thus contribute to the sorting of heterogeneous cell types. Acts as a regulator of neural stem cells quiescence by mediating anchorage of neural stem cells to ependymocytes in the adult subependymal zone: upon cleavage by MMP24, CDH2-mediated anchorage is affected, leading to modulate neural stem cell quiescence. Plays a role in cell-to-cell junction formation between pancreatic beta cells and neural crest stem (NCS) cells, promoting the formation of processes by NCS cells. Required for proper neurite branching. Required for pre- and postsynaptic organization. CDH2 may be involved in neuronal recognition mechanism. In hippocampal neurons, may regulate dendritic spine density. The polypeptide is Cadherin-2 (CDH2) (Cricetulus griseus (Chinese hamster)).